We begin with the raw amino-acid sequence, 131 residues long: Histone H2A.2 (131 aa).

Position 2 is an N-acetylserine (serine 2). Lysine 5 and lysine 8 each carry N6-acetyllysine. Glutamine 106 carries the post-translational modification N5-methylglutamine. Serine 128 is modified (phosphoserine). Residues 128–129 carry the [ST]-Q motif motif; that stretch reads SQ.

It belongs to the histone H2A family. The nucleosome is a histone octamer containing two molecules each of H2A, H2B, H3 and H4 assembled in one H3-H4 heterotetramer and two H2A-H2B heterodimers. The octamer wraps approximately 147 bp of DNA. In terms of processing, phosphorylated to form H2AS128ph (gamma-H2A) in response to DNA double-strand breaks (DSBs) generated by exogenous genotoxic agents and by stalled replication forks. Phosphorylation is dependent on the DNA damage checkpoint kinases MEC1/ATR and TEL1/ATM, spreads on either side of a detected DSB site and may mark the surrounding chromatin for recruitment of proteins required for DNA damage signaling and repair. Gamma-H2A is removed from the DNA prior to the strand invasion-primer extension step of the repair process and subsequently dephosphorylated by PPH3, a component of the histone H2A phosphatase complex (HTP-C). Dephosphorylation is necessary for efficient recovery from the DNA damage checkpoint. Acetylated by ESA1 to form H2AK4ac and H2AK7ac.

It localises to the nucleus. The protein resides in the chromosome. Core component of nucleosome which plays a central role in DNA double strand break (DSB) repair. Nucleosomes wrap and compact DNA into chromatin, limiting DNA accessibility to the cellular machineries which require DNA as a template. Histones thereby play a central role in transcription regulation, DNA repair, DNA replication and chromosomal stability. DNA accessibility is regulated via a complex set of post-translational modifications of histones, also called histone code, and nucleosome remodeling. The sequence is that of Histone H2A.2 (HTA2) from Candida glabrata (strain ATCC 2001 / BCRC 20586 / JCM 3761 / NBRC 0622 / NRRL Y-65 / CBS 138) (Yeast).